A 286-amino-acid chain; its full sequence is Pyridoxal kinase PdxY (286 aa).

Substrate-binding positions include S9 and 44–45; that span reads TQ. ATP is bound by residues D111, A143, E148, K181, and 208–211; that span reads RPLV. Position 223 (D223) interacts with substrate.

This sequence belongs to the pyridoxine kinase family. PdxY subfamily. As to quaternary structure, homodimer. Mg(2+) serves as cofactor.

The enzyme catalyses pyridoxal + ATP = pyridoxal 5'-phosphate + ADP + H(+). It participates in cofactor metabolism; pyridoxal 5'-phosphate salvage; pyridoxal 5'-phosphate from pyridoxal: step 1/1. Its function is as follows. Pyridoxal kinase involved in the salvage pathway of pyridoxal 5'-phosphate (PLP). Catalyzes the phosphorylation of pyridoxal to PLP. This is Pyridoxal kinase PdxY from Salmonella paratyphi A (strain ATCC 9150 / SARB42).